The following is a 270-amino-acid chain: Protein MGF 110-1L (270 aa).

An N-terminal signal peptide occupies residues 1–26 (MLGLQIITLLFIPTLLYAYELEPLER). The stretch at 1 to 146 (MLGLQIITLL…YIRKRSLQTI (146 aa)) is one A repeat. N75 carries an N-linked (GlcNAc...) asparagine; by host glycan. The next 2 membrane-spanning stretches (helical) occupy residues 118–138 (WQKLLTYGFYLVGCVLVVNYI) and 146–166 (IVYLLVLLVIFFLLSQLMLYR). The stretch at 147 to 270 (VYLLVLLVIF…DNLMKKQDIM (124 aa)) is one B repeat.

The protein belongs to the asfivirus MGF 110 family.

The protein resides in the membrane. Functionally, plays a role in virus cell tropism, and may be required for efficient virus replication in macrophages. This chain is Protein MGF 110-1L, found in Ornithodoros (relapsing fever ticks).